Reading from the N-terminus, the 196-residue chain is dITP/XTP pyrophosphatase (196 aa).

Substrate is bound at residue 8–13 (TKNEGK). 2 residues coordinate Mg(2+): Glu41 and Asp70. The Proton acceptor role is filled by Asp70. Substrate contacts are provided by residues Ser71, 153-156 (FGYD), Lys176, and 181-182 (HR).

It belongs to the HAM1 NTPase family. In terms of assembly, homodimer. It depends on Mg(2+) as a cofactor.

It catalyses the reaction XTP + H2O = XMP + diphosphate + H(+). It carries out the reaction dITP + H2O = dIMP + diphosphate + H(+). The catalysed reaction is ITP + H2O = IMP + diphosphate + H(+). Pyrophosphatase that catalyzes the hydrolysis of nucleoside triphosphates to their monophosphate derivatives, with a high preference for the non-canonical purine nucleotides XTP (xanthosine triphosphate), dITP (deoxyinosine triphosphate) and ITP. Seems to function as a house-cleaning enzyme that removes non-canonical purine nucleotides from the nucleotide pool, thus preventing their incorporation into DNA/RNA and avoiding chromosomal lesions. The sequence is that of dITP/XTP pyrophosphatase from Bacillus licheniformis (strain ATCC 14580 / DSM 13 / JCM 2505 / CCUG 7422 / NBRC 12200 / NCIMB 9375 / NCTC 10341 / NRRL NRS-1264 / Gibson 46).